The sequence spans 646 residues: uncharacterized protein (646 aa).

8 consecutive transmembrane segments (helical) span residues Ile-20–Leu-42, Phe-55–Val-77, Leu-97–Leu-115, Tyr-127–Trp-149, Ile-159–Leu-181, Ile-188–Ala-206, Tyr-216–Phe-238, and Trp-251–Ala-273.

Its subcellular location is the cell membrane. This is an uncharacterized protein from Bacillus subtilis (strain 168).